Here is a 2527-residue protein sequence, read N- to C-terminus: Neurogenic locus notch homolog protein 1 (2527 aa).

An N-terminal signal peptide occupies residues M1 to S36. Over S37–H1741 the chain is Extracellular. Disulfide bonds link C40–C53, C47–C62, C64–C73, C79–C90, C84–C103, C105–C114, C122–C133, C127–C143, C145–C154, C160–C171, C165–C180, C182–C191, C198–C211, C205–C220, C222–C231, C238–C249, C243–C259, C261–C270, C277–C288, C282–C297, C299–C308, C315–C328, C322–C337, C339–C348, C355–C366, C360–C375, C377–C386, C392–C403, C397–C414, C416–C425, C432–C445, C439–C454, and C456–C465. An N-linked (GlcNAc...) asparagine glycan is attached at N57. 3 consecutive EGF-like domains span residues D75 to L115, L118 to Q155, and Q156 to R192. Residue S81 is glycosylated (O-linked (Glc...) serine). T89 is a glycosylation site (O-linked (Fuc...) threonine). A glycan (O-linked (Fuc...) threonine) is linked at T132. The O-linked (Glc...) serine glycan is linked to S162. The EGF-like 4; calcium-binding domain occupies D194 to E232. T210 carries O-linked (Fuc...) threonine glycosylation. The EGF-like 5 domain occupies P234–E271. T248 carries O-linked (Fuc...) threonine; alternate glycosylation. A glycan (O-linked (GalNAc...) threonine; alternate) is linked at T248. In terms of domain architecture, EGF-like 6; calcium-binding spans N273–T309. Positions D311 to S349 constitute an EGF-like 7; calcium-binding domain. An O-linked (Fuc...) threonine glycan is attached at T327. An EGF-like 8; calcium-binding domain is found at N351–H387. An O-linked (Glc...) serine glycan is attached at S357. O-linked (Fuc...) threonine glycosylation is present at T365. The 39-residue stretch at L388 to S426 folds into the EGF-like 9 domain. S394 carries O-linked (Glc...) serine glycosylation. The EGF-like 10; calcium-binding domain occupies D428–E466. Residues A436–N437 form an interaction with DLL4 region. The Ca(2+) site is built by T448 and S451. An O-linked (Glc...) serine glycan is attached at S451. The tract at residues R464–D468 is interaction with DLL4. Residues D468, V469, and E471 each coordinate Ca(2+). Residues D468–E504 enclose the EGF-like 11; calcium-binding domain. Disulfide bonds link C472–C483, C477–C492, and C494–C503. An O-linked (Glc...) serine glycan is attached at S474. Residue T482 is glycosylated (O-linked (Fuc...) threonine). The Ca(2+) site is built by D485 and Q486. Ca(2+) contacts are provided by N506, T507, and E509. The 37-residue stretch at N506–Q542 folds into the EGF-like 12; calcium-binding domain. Disulfide bonds link C510/C521, C515/C530, C532/C541, C548/C559, C553/C568, C570/C579, C586/C596, C591/C605, C607/C616, C623/C634, C628/C643, C645/C654, C661/C671, C666/C680, C682/C691, C698/C709, C703/C718, C720/C729, C736/C746, C741/C755, C757/C766, C773/C784, C778/C793, C795/C804, C811/C822, C816/C831, C833/C842, and C849/C860. The O-linked (Glc...) serine glycan is linked to S512. Residues D523 and K524 each coordinate Ca(2+). Residues D544–E580 form the EGF-like 13; calcium-binding domain. S550 carries an O-linked (Glc...) serine glycan. The EGF-like 14; calcium-binding domain occupies D582–E617. The region spanning N619–E655 is the EGF-like 15; calcium-binding domain. The O-linked (Glc...) serine glycan is linked to S625. T633 carries an O-linked (Fuc...) threonine glycan. An EGF-like 16; calcium-binding domain is found at N657–N692. S663 carries an O-linked (Glc...) serine glycan. One can recognise an EGF-like 17; calcium-binding domain in the interval N694 to L730. Residue T708 is glycosylated (O-linked (Fuc...) threonine). Positions E732–D767 constitute an EGF-like 18; calcium-binding domain. S738 is a glycosylation site (O-linked (Glc...) serine). One can recognise an EGF-like 19 domain in the interval N769 to Q805. Residue S775 is glycosylated (O-linked (Glc...) serine). T783 is a glycosylation site (O-linked (Fuc...) threonine). An O-linked (GlcNAc) serine glycan is attached at S800. In terms of domain architecture, EGF-like 20; calcium-binding spans N807 to E843. A glycan (O-linked (Glc...) serine) is linked at S813. O-linked (Fuc...) threonine glycosylation occurs at T821. The EGF-like 21 domain maps to V845 to E883. The region spanning D885 to E921 is the EGF-like 22; calcium-binding domain. N-linked (GlcNAc...) asparagine glycosylation is present at N904. O-linked (GlcNAc) threonine glycosylation occurs at T916. Residues D923 to E959 form the EGF-like 23 domain. Residue S937 is glycosylated (O-linked (Fuc) serine). One can recognise an EGF-like 24; calcium-binding domain in the interval D961–E997. O-linked (Glc...) serine glycosylation is present at S967. The N-linked (GlcNAc...) asparagine glycan is linked to N975. 5 EGF-like domains span residues N999–Q1035, D1037–Q1073, L1075–D1111, L1113–E1159, and E1161–S1197. T1013 carries O-linked (Fuc...) threonine glycosylation. S1043 carries an O-linked (Glc...) serine glycan. Residue T1051 is glycosylated (O-linked (Fuc...) threonine). O-linked (Glc...) serine glycosylation occurs at S1081. A disulfide bridge links C1117 with C1138. A glycan (O-linked (Fuc...) threonine) is linked at T1175. An N-linked (GlcNAc...) asparagine glycan is attached at N1195. One can recognise an EGF-like 30; calcium-binding domain in the interval E1199 to E1235. O-linked (Glc...) serine glycosylation occurs at S1205. The O-linked (Fuc...) threonine glycan is linked to T1213. Residues N1237–E1281 form the EGF-like 31; calcium-binding domain. N1257 carries an N-linked (GlcNAc...) asparagine glycan. 4 EGF-like domains span residues D1283–E1321, V1323–E1362, D1364–Q1400, and A1403–H1442. S1289 is a glycosylation site (O-linked (Glc...) serine). T1378 is a glycosylation site (O-linked (Fuc...) threonine). O-linked (GlcNAc...) threonine glycosylation occurs at T1395. T1418 carries an O-linked (Fuc...) threonine; alternate glycan. An O-linked (GalNAc...) threonine; alternate glycan is attached at T1418. 3 LNR repeats span residues C1465–N1505, C1506–L1547, and Y1548–A1587. Positions 1473, 1476, 1491, and 1494 each coordinate Ca(2+). N1505 carries an N-linked (GlcNAc...) asparagine glycan. N1603 carries an N-linked (GlcNAc...) asparagine glycan. A glycan (O-linked (GalNAc...) threonine) is linked at T1731. The tract at residues P1734 to R1766 is interaction with PSEN1. The helical transmembrane segment at L1742–L1762 threads the bilayer. At S1763–K2527 the chain is on the cytoplasmic side. A Glycyl lysine isopeptide (Lys-Gly) (interchain with G-Cter in ubiquitin) cross-link involves residue K1765. The disordered stretch occupies residues K1786–D1814. The residue at position 1867 (T1867) is a Phosphothreonine. 5 ANK repeats span residues T1933–I1962, M1966–A1996, D2000–A2029, L2033–M2062, and K2066–I2095. The segment at L1953–N1961 is HIF1AN-binding. The residue at position 1961 (N1961) is a (3S)-3-hydroxyasparagine; by HIF1AN; partial. The segment at L2020–N2028 is HIF1AN-binding. (3S)-3-hydroxyasparagine; by HIF1AN is present on N2028. 3 disordered regions span residues S2157–S2201, Q2378–V2424, and P2436–K2527. Low complexity predominate over residues Q2378–S2391. The span at P2436–L2474 shows a compositional bias: polar residues. Positions P2484–S2499 are enriched in low complexity. A compositionally biased stretch (polar residues) spans N2500 to T2520.

The protein belongs to the NOTCH family. As to quaternary structure, heterodimer of a C-terminal fragment N(TM) and an N-terminal fragment N(EC) which are probably linked by disulfide bonds. Interacts with DNER, DTX1, DTX2 and RBPJ/RBPSUH. Also interacts with MAML1, MAML2 and MAML3 which act as transcriptional coactivators for NOTCH1. Notch 1 intracellular domain interacts with SNW1; the interaction involves multimerized NOTCH1 NICD and is implicated in a formation of an intermediate preactivation complex which associates with DNA-bound CBF-1/RBPJ. The activated membrane-bound form interacts with AAK1 which promotes NOTCH1 stabilization. Forms a trimeric complex with FBXW7 and SGK1. Interacts with HIF1AN. HIF1AN negatively regulates the function of notch intracellular domain (NICD), accelerating myogenic differentiation. Interacts (via NICD) with SNAI1 (via zinc fingers); the interaction induces SNAI1 degradation via MDM2-mediated ubiquitination and inhibits SNAI1-induced cell invasion. Interacts (via NICD) with MDM2A. Interacts (via NICD) with BCL6; the interaction decreases MAML1 recruitment by NOTCH1 NICD on target genes DNA and inhibits NOTCH1 transactivation activity. Interacts with THBS4. Interacts (via the EGF-like repeat region) with CCN3 (via CTCK domain). Interacts (via EGF-like domains) with DLL4 (via N-terminal DSL and MNNL domains). Interacts with ZMIZ1. Interacts (via NICD domain) with MEGF10 (via the cytoplasmic domain). Interacts with DLL1 and JAG1. Interacts (via NICD domain) with PRAG1. Forms a complex with PRAG1, N1ICD and MAML1, in a MAML1-dependent manner. Interacts (via transmembrane region) with PSEN1; the interaction is direct. Interacts with ZFP64. Synthesized in the endoplasmic reticulum as an inactive form which is proteolytically cleaved by a furin-like convertase in the trans-Golgi network before it reaches the plasma membrane to yield an active, ligand-accessible form. Cleavage results in a C-terminal fragment N(TM) and a N-terminal fragment N(EC). Following ligand binding, it is cleaved by ADAM17 to yield a membrane-associated intermediate fragment called notch extracellular truncation (NEXT). Following endocytosis, this fragment is then cleaved by one of the catalytic subunits of gamma-secretase (PSEN1 or PSEN2) to release a Notch-derived peptide containing the intracellular domain (NICD) from the membrane. In terms of processing, phosphorylated. Post-translationally, O-linked glycosylation by GALNT11 is involved in determination of left/right symmetry: glycosylation promotes activation of NOTCH1, possibly by promoting cleavage by ADAM17, modulating the balance between motile and immotile (sensory) cilia at the left-right organiser (LRO). O-glycosylated on the EGF-like domains. O-glucosylated at Ser-451 by KDELC1 and KDELC2. Contains both O-linked fucose and O-linked glucose in the EGF-like domains 11, 12 and 13, which are interacting with the residues on DLL4. MFNG-, RFNG- and LFNG-mediated modification of O-fucose residues at specific EGF-like domains results in inhibition of its activation by JAG1 and enhancement of its activation by DLL1 via an increased binding to DLL1. Ubiquitinated. Undergoes 'Lys-29'-linked polyubiquitination by ITCH; promotes the lysosomal degradation of non-activated internalized NOTCH1. Deubiquitination by USP12 is required for transport of internalized non-activated receptor from late endosomes to lysosomes for degradation. Monoubiquitination at Lys-1765 is required for activation by gamma-secretase cleavage, it promotes interaction with AAK1, which stabilizes it. Deubiquitination by EIF3F is necessary for nuclear import of activated Notch. In terms of processing, hydroxylated at Asn-1961 by HIF1AN. Hydroxylated at Asn-2028 by HIF1AN. Hydroxylation reduces affinity for HI1AN and may thus indirectly modulate negative regulation of NICD.

The protein resides in the cell membrane. It is found in the late endosome membrane. Its subcellular location is the nucleus. Functions as a receptor for membrane-bound ligands Jagged-1 (JAG1), Jagged-2 (JAG2) and Delta-1 (DLL1) to regulate cell-fate determination. Upon ligand activation through the released notch intracellular domain (NICD) it forms a transcriptional activator complex with RBPJ/RBPSUH and activates genes of the enhancer of split locus. Affects the implementation of differentiation, proliferation and apoptotic programs. Involved in angiogenesis; negatively regulates endothelial cell proliferation and migration and angiogenic sprouting. Involved in the maturation of both CD4(+) and CD8(+) cells in the thymus. Important for follicular differentiation and possibly cell fate selection within the follicle. During cerebellar development, functions as a receptor for neuronal DNER and is involved in the differentiation of Bergmann glia. Represses neuronal and myogenic differentiation. May play an essential role in postimplantation development, probably in some aspect of cell specification and/or differentiation. May be involved in mesoderm development, somite formation and neurogenesis. May enhance HIF1A function by sequestering HIF1AN away from HIF1A. Required for the THBS4 function in regulating protective astrogenesis from the subventricular zone (SVZ) niche after injury. Involved in determination of left/right symmetry by modulating the balance between motile and immotile (sensory) cilia at the left-right organiser (LRO). This is Neurogenic locus notch homolog protein 1 (NOTCH1) from Cricetulus griseus (Chinese hamster).